The sequence spans 258 residues: MKITKIEKKKRLYLLELDDSEKLYITEDTIVHFMLSRGMEITDQELSEIQDYAQFSYGKNLALYHLSFKQRTTKEVKDYLTRHDIQPETISQVLDNLKKDNWVNDRKYANSFIQSNLLTGDKGTFVLKQKLTQKGISSTIIEEELSQFDFTELTDKVAEKLLKKYQGKLPSKALQDKLLQSLINKGFSYSQAKTAYQHLDIEEDQENQEELLYKELDKQYRKYSKKYDGYDLKQRLTQALARKGYDYSDISSVLRDYF.

The protein belongs to the RecX family.

It localises to the cytoplasm. Modulates RecA activity. This is Regulatory protein RecX from Streptococcus gordonii (strain Challis / ATCC 35105 / BCRC 15272 / CH1 / DL1 / V288).